The following is a 30-amino-acid chain: Arsenate respiratory reductase iron-sulfur subunit ArrB (30 aa).

Cys12, Cys15, Cys18, and Cys22 together coordinate [4Fe-4S] cluster.

Heterodimer composed of one large subunit (ArrA) and one small subunit (ArrB). [4Fe-4S] cluster is required as a cofactor.

Its subcellular location is the periplasm. In terms of biological role, component of the arsenate respiratory reductase (Arr) complex, which catalyzes the reduction of arsenate (As(V)) to arsenite (As(III)). ArrB is probably the electron transfer subunit. This is Arsenate respiratory reductase iron-sulfur subunit ArrB from Chrysiogenes arsenatis.